The chain runs to 435 residues: Maltodextrin transport system permease protein MalC (435 aa).

The next 10 helical transmembrane spans lie at 34–54 (GFIF…LATP), 73–93 (FMLI…LFYF), 130–150 (YLLI…PVIV), 199–219 (IIWA…TAII), 230–250 (IFGV…ILTF), 263–283 (TQVL…LIPW), 294–314 (LIMM…LGIL), 338–358 (NITF…QYTF), 371–391 (GGGP…ISWI), and 404–424 (MAAA…MIAF). Positions 195-423 (LSWTIIWALA…IIVISISMIA (229 aa)) constitute an ABC transmembrane type-1 domain.

It belongs to the binding-protein-dependent transport system permease family. MalFG subfamily.

Its subcellular location is the cell membrane. Functionally, part of the binding-protein-dependent transport system for maltodextrin; probably responsible for the translocation of the substrate across the membrane. This Streptococcus pneumoniae serotype 4 (strain ATCC BAA-334 / TIGR4) protein is Maltodextrin transport system permease protein MalC (malC).